The sequence spans 1483 residues: Neuropathy target esterase sws (1483 aa).

Residues 1 to 34 lie on the Lumenal side of the membrane; it reads MDVLELLRASANGCYNTLFSDAWFQYVSKQIATT. The helical transmembrane segment at 35–55 threads the bilayer; that stretch reads MYWYGALLVIGVLFIAWFLYF. The Cytoplasmic portion of the chain corresponds to 56–1483; that stretch reads KRLARLRLRD…ENLTKTDTKN (1428 aa). 174-301 provides a ligand contact to a nucleoside 3',5'-cyclic phosphate; it reads IFGHFEKPIF…IRVIQVIMIR (128 aa). 2 disordered regions span residues 348–380 and 404–440; these read ASRP…PNAN and SSAV…GTSI. The span at 413 to 440 shows a compositional bias: polar residues; it reads GTRRSSTTYGPSGESPNGNANTAPGTSI. Phosphoserine is present on residues S418 and S424. A nucleoside 3',5'-cyclic phosphate contacts are provided by residues 456–585 and 574–701; these read ELGL…VVRR and IVLD…LSHR. Residues 927–1093 form the PNPLA domain; it reads LVLGGGGARG…VNNLPGHLWR (167 aa). Positions 931 to 936 match the GXGXXG motif; the sequence is GGGARG. The GXSXG motif lies at 958–962; sequence GVSIG. The active-site Nucleophile is S960. The active-site Proton acceptor is the D1080. The DGA/G motif lies at 1080 to 1082; it reads DGG. At S1174 the chain carries Phosphoserine. Residues 1349-1483 are disordered; that stretch reads DKATQSTPPT…ENLTKTDTKN (135 aa). Residues 1351-1373 are compositionally biased toward polar residues; the sequence is ATQSTPPTPNKQHALSPTSSQTN. The span at 1382–1396 shows a compositional bias: basic and acidic residues; that stretch reads KPKEKQPSYDKLDRE. The segment covering 1410–1419 has biased composition (low complexity); sequence ERSSMQQRDS. Residues 1445–1458 are compositionally biased toward basic and acidic residues; it reads LNKPEQQPEQKPVP. Over residues 1465-1474 the composition is skewed to low complexity; it reads QKQQDQQQQE.

This sequence belongs to the NTE family. Interacts with Pka-C3; interaction inhibits the catalytic function of Pka-C3 and the esterase activity of sws.

It localises to the endoplasmic reticulum membrane. It carries out the reaction a 1-acyl-sn-glycero-3-phosphocholine + H2O = sn-glycerol 3-phosphocholine + a fatty acid + H(+). Its function is as follows. Phospholipase B that deacylates intracellular phosphatidylcholine (PtdCho), generating glycerophosphocholine (GroPtdCho). This deacylation occurs at both sn-2 and sn-1 positions of PtdCho. Its specific chemical modification by certain organophosphorus (OP) compounds leads to distal axonopathy. Plays a role in the signaling mechanism between neurons and glia that regulates glia wrapping during development of the adult brain. Essential for membrane lipid homeostasis and cell survival in both neurons and glia of the adult brain. The protein is Neuropathy target esterase sws of Drosophila virilis (Fruit fly).